The chain runs to 330 residues: Exostosin-like 2 (330 aa).

At 1-22 (MRCCHICKLPGRVMGIRVLRLS) the chain is on the cytoplasmic side. A helical; Signal-anchor for type II membrane protein membrane pass occupies residues 23–43 (LVVILVLLLVAGALTALLPSV). The Lumenal portion of the chain corresponds to 44 to 330 (KEDKMLMLRR…FPYANYKRKI (287 aa)). Gln-71 contacts UDP-N-acetyl-alpha-D-galactosamine. A UDP-N-acetyl-alpha-D-glucosamine-binding site is contributed by Gln-71. Residue Asn-74 is glycosylated (N-linked (GlcNAc...) asparagine). Residues Arg-75, Asn-100, Asn-129, Arg-134, Asp-150, Asp-151, Asp-152, and Asp-244 each coordinate UDP-N-acetyl-alpha-D-galactosamine. Arg-75, Asn-100, Asn-129, Arg-134, Asp-150, Asp-151, Asp-152, Asp-244, Asp-245, and Arg-293 together coordinate UDP-N-acetyl-alpha-D-glucosamine. Asp-152 serves as a coordination point for Mn(2+). An intrachain disulfide couples Cys-243 to Cys-296. The active site involves Asp-245. Arg-293 contributes to the UDP-N-acetyl-alpha-D-galactosamine binding site.

The protein belongs to the glycosyltransferase 47 family. The cofactor is Mn(2+). In terms of processing, the soluble form derives from the membrane form by proteolytic processing. In terms of tissue distribution, ubiquitous.

It localises to the endoplasmic reticulum membrane. It is found in the secreted. It catalyses the reaction 3-O-(beta-D-GlcA-(1-&gt;3)-beta-D-Gal-(1-&gt;3)-beta-D-Gal-(1-&gt;4)-beta-D-Xyl)-L-seryl-[protein] + UDP-N-acetyl-alpha-D-glucosamine = 3-O-(alpha-D-GlcNAc-(1-&gt;4)-beta-D-GlcA-(1-&gt;3)-beta-D-Gal-(1-&gt;3)-beta-D-Gal-(1-&gt;4)-beta-D-Xyl)-L-seryl-[protein] + UDP + H(+). It participates in glycan metabolism; heparan sulfate biosynthesis. In terms of biological role, glycosyltransferase required for the biosynthesis of heparan-sulfate and responsible for the alternating addition of beta-1-4-linked glucuronic acid (GlcA) and alpha-1-4-linked N-acetylglucosamine (GlcNAc) units to nascent heparan sulfate chains. The polypeptide is Exostosin-like 2 (EXTL2) (Homo sapiens (Human)).